The sequence spans 134 residues: Small ribosomal subunit protein uS9c (134 aa).

Belongs to the universal ribosomal protein uS9 family.

It is found in the plastid. It localises to the chloroplast. In Thalassiosira pseudonana (Marine diatom), this protein is Small ribosomal subunit protein uS9c (rps9).